We begin with the raw amino-acid sequence, 318 residues long: NADH-ubiquinone oxidoreductase chain 1 (318 aa).

The next 8 helical transmembrane spans lie at 3–23, 70–90, 100–120, 146–166, 171–191, 222–242, 253–273, and 294–314; these read MVNL…LTLI, MFII…IPLP, LAVL…LWSG, LAII…STLI, HTWL…STLA, LFFM…AILF, ELYT…FLWI, and LPLT…MAGI.

It belongs to the complex I subunit 1 family.

Its subcellular location is the mitochondrion inner membrane. The catalysed reaction is a ubiquinone + NADH + 5 H(+)(in) = a ubiquinol + NAD(+) + 4 H(+)(out). Core subunit of the mitochondrial membrane respiratory chain NADH dehydrogenase (Complex I) that is believed to belong to the minimal assembly required for catalysis. Complex I functions in the transfer of electrons from NADH to the respiratory chain. The immediate electron acceptor for the enzyme is believed to be ubiquinone. The sequence is that of NADH-ubiquinone oxidoreductase chain 1 (MT-ND1) from Pteropus vampyrus (Large flying fox).